A 450-amino-acid polypeptide reads, in one-letter code: Signal recognition particle protein (450 aa).

Residues 106–113 (GLQGSGKT), 188–192 (DTAGR), and 246–249 (TKLD) each bind GTP.

Belongs to the GTP-binding SRP family. SRP54 subfamily. As to quaternary structure, part of the signal recognition particle protein translocation system, which is composed of SRP and FtsY.

It localises to the cytoplasm. The enzyme catalyses GTP + H2O = GDP + phosphate + H(+). Involved in targeting and insertion of nascent membrane proteins into the cytoplasmic membrane. Binds to the hydrophobic signal sequence of the ribosome-nascent chain (RNC) as it emerges from the ribosomes. The SRP-RNC complex is then targeted to the cytoplasmic membrane where it interacts with the SRP receptor FtsY. This chain is Signal recognition particle protein, found in Mycoplasma pneumoniae (strain ATCC 29342 / M129 / Subtype 1) (Mycoplasmoides pneumoniae).